Consider the following 596-residue polypeptide: Clathrin heavy chain linker domain-containing protein 1 (596 aa).

Positions 129-241 form a coiled coil; sequence QLEAKMRIIE…RDIAENLKKD (113 aa).

The sequence is that of Clathrin heavy chain linker domain-containing protein 1 (Clhc1) from Mus musculus (Mouse).